The following is a 69-amino-acid chain: uncharacterized protein (69 aa).

The stretch at leucine 21–lysine 64 forms a coiled coil.

This is an uncharacterized protein from Saccharomyces cerevisiae (strain ATCC 204508 / S288c) (Baker's yeast).